A 42-amino-acid chain; its full sequence is Cytochrome b559 subunit beta (42 aa).

The chain crosses the membrane as a helical span at residues 17–33 (WLTIHALAVPTVFFLGA). His-21 is a binding site for heme.

The protein belongs to the PsbE/PsbF family. Heterodimer of an alpha subunit and a beta subunit. PSII is composed of 1 copy each of membrane proteins PsbA, PsbB, PsbC, PsbD, PsbE, PsbF, PsbH, PsbI, PsbJ, PsbK, PsbL, PsbM, PsbT, PsbX, PsbY, PsbZ, Psb30/Ycf12, at least 3 peripheral proteins of the oxygen-evolving complex and a large number of cofactors. It forms dimeric complexes. Heme b serves as cofactor.

Its subcellular location is the plastid. The protein localises to the chloroplast thylakoid membrane. Functionally, this b-type cytochrome is tightly associated with the reaction center of photosystem II (PSII). PSII is a light-driven water:plastoquinone oxidoreductase that uses light energy to abstract electrons from H(2)O, generating O(2) and a proton gradient subsequently used for ATP formation. It consists of a core antenna complex that captures photons, and an electron transfer chain that converts photonic excitation into a charge separation. The chain is Cytochrome b559 subunit beta from Emiliania huxleyi (Coccolithophore).